A 1556-amino-acid polypeptide reads, in one-letter code: uncharacterized protein (1556 aa).

An N-acetylserine modification is found at S2. Residues 145-156 (NQLENRKSLERK) show a composition bias toward basic and acidic residues. The segment at 145–170 (NQLENRKSLERKPSRKRRKKNSNVND) is disordered. The Helicase ATP-binding domain occupies 378-583 (SGDYPVCAKG…MIMSYLKLHP (206 aa)). 391-398 (EEMGLGKT) is a binding site for ATP. At S810 the chain carries Phosphoserine. The tract at residues 810–850 (SEDEDEHMDERFGEKETSSGDESDREINGAKNHDNHNNDGM) is disordered. Basic and acidic residues-rich tracts occupy residues 817–827 (MDERFGEKETS) and 834–846 (REIN…DNHN). Residues 1239 to 1277 (CSICLGEVEIGAIIKCGHYFCKSCILTWLRAHSKCPICK) form an RING-type zinc finger. A compositionally biased stretch (basic and acidic residues) spans 1297–1309 (REKEIQEPRREGA). 2 disordered regions span residues 1297 to 1319 (REKE…SNEN) and 1508 to 1534 (EKSK…AKFE). Positions 1310-1319 (DSSQDNSNEN) are enriched in low complexity. One can recognise a Helicase C-terminal domain in the interval 1363–1531 (KLISYLRLKS…ETDNEESDDA (169 aa)). The span at 1508–1518 (EKSKKGDKYDE) shows a compositional bias: basic and acidic residues. Positions 1519–1529 (AQDETDNEESD) are enriched in acidic residues.

Belongs to the SNF2/RAD54 helicase family.

It is found in the nucleus. Is probably involved in a pathway contributing to genomic integrity. This is an uncharacterized protein from Saccharomyces cerevisiae (strain ATCC 204508 / S288c) (Baker's yeast).